Consider the following 184-residue polypeptide: GTP cyclohydrolase 1 (184 aa).

Residues cysteine 75, histidine 78, and cysteine 146 each coordinate Zn(2+).

Belongs to the GTP cyclohydrolase I family. As to quaternary structure, toroid-shaped homodecamer, composed of two pentamers of five dimers.

The catalysed reaction is GTP + H2O = 7,8-dihydroneopterin 3'-triphosphate + formate + H(+). It functions in the pathway cofactor biosynthesis; 7,8-dihydroneopterin triphosphate biosynthesis; 7,8-dihydroneopterin triphosphate from GTP: step 1/1. This Pseudoalteromonas translucida (strain TAC 125) protein is GTP cyclohydrolase 1.